Reading from the N-terminus, the 100-residue chain is Small ribosomal subunit protein uS14c (100 aa).

This sequence belongs to the universal ribosomal protein uS14 family. As to quaternary structure, part of the 30S ribosomal subunit.

Its subcellular location is the plastid. It localises to the chloroplast. Functionally, binds 16S rRNA, required for the assembly of 30S particles. The chain is Small ribosomal subunit protein uS14c from Huperzia lucidula (Shining clubmoss).